Reading from the N-terminus, the 135-residue chain is MAHTVLQPFKRINLPVLNAYNNLFCNTFLVQTRSYAKKPVFKGKGKGMVKEVLKGPEVCKDPAKLCTYAVGVNVFKQGEDPTIKPKDEYPEWLFQLNLGPVKQLNELEPDSWEYWRRIRKEHIWRHNKLNKGKKM.

Belongs to the mitochondrion-specific ribosomal protein mL54 family. In terms of assembly, component of the mitochondrial ribosome large subunit (39S) which comprises a 16S rRNA and about 50 distinct proteins.

It localises to the mitochondrion. This is Large ribosomal subunit protein mL54 (mrpl54) from Danio rerio (Zebrafish).